A 174-amino-acid chain; its full sequence is Adenine phosphoribosyltransferase (174 aa).

It belongs to the purine/pyrimidine phosphoribosyltransferase family. As to quaternary structure, homodimer.

The protein localises to the cytoplasm. It catalyses the reaction AMP + diphosphate = 5-phospho-alpha-D-ribose 1-diphosphate + adenine. Its pathway is purine metabolism; AMP biosynthesis via salvage pathway; AMP from adenine: step 1/1. Catalyzes a salvage reaction resulting in the formation of AMP, that is energically less costly than de novo synthesis. This is Adenine phosphoribosyltransferase from Nitrosomonas europaea (strain ATCC 19718 / CIP 103999 / KCTC 2705 / NBRC 14298).